The sequence spans 660 residues: ATPase WRNIP1 (660 aa).

The UBZ4-type zinc finger occupies 17–44 (QVQCPVCQQMMPAAHINSHLDRCLLLHP). Zn(2+) contacts are provided by cysteine 20, cysteine 23, histidine 31, histidine 35, and cysteine 39. Positions 48–191 (AEPAAGSHRA…DDPGHWDADA (144 aa)) are disordered. Phosphoserine is present on residues serine 65 and serine 75. Positions 76 to 89 (ESSALKQPATPTAA) are enriched in polar residues. Lysine 81 participates in a covalent cross-link: Glycyl lysine isopeptide (Lys-Gly) (interchain with G-Cter in ubiquitin). Threonine 85 bears the Phosphothreonine mark. Phosphoserine occurs at positions 91 and 92. Acidic residues predominate over residues 92–104 (SEGEGEEGDDGGE). The residue at position 116 (threonine 116) is a Phosphothreonine. Over residues 135-155 (ARKGMGKRPAAAAAAGSASPR) the composition is skewed to low complexity. Lysine 141 is covalently cross-linked (Glycyl lysine isopeptide (Lys-Gly) (interchain with G-Cter in ubiquitin)). Phosphoserine is present on serine 153. Acidic residues predominate over residues 159 to 182 (EAEAQEEEEAGVDGDGDADVDGED). Lysine 220 participates in a covalent cross-link: Glycyl lysine isopeptide (Lys-Gly) (interchain with G-Cter in ubiquitin). Residue 265–271 (PGCGKTT) coordinates ATP. Residues lysine 296, lysine 305, lysine 311, lysine 317, and lysine 330 each participate in a glycyl lysine isopeptide (Lys-Gly) (interchain with G-Cter in ubiquitin) cross-link. Lysine 477 participates in a covalent cross-link: Glycyl lysine isopeptide (Lys-Gly) (interchain with G-Cter in SUMO2); alternate. Residue lysine 477 forms a Glycyl lysine isopeptide (Lys-Gly) (interchain with G-Cter in ubiquitin); alternate linkage. 2 positions are modified to phosphotyrosine: tyrosine 529 and tyrosine 557. Lysine 622 is covalently cross-linked (Glycyl lysine isopeptide (Lys-Gly) (interchain with G-Cter in ubiquitin)). Residue lysine 628 forms a Glycyl lysine isopeptide (Lys-Gly) (interchain with G-Cter in ubiquitin); alternate linkage. Residue lysine 628 is modified to N6-acetyllysine; alternate. Residue lysine 631 forms a Glycyl lysine isopeptide (Lys-Gly) (interchain with G-Cter in ubiquitin) linkage.

It belongs to the AAA ATPase family. RarA/MGS1/WRNIP1 subfamily. As to quaternary structure, forms homooligomers, possibly octamers. Directly interacts with POLD1, POLD2 and POLD4. Interacts with the N-terminal domain of WRN. Interacts (via UBZ4-type zinc finger) with monoubiquitin and polyubiquitin. Interacts with TRIM14 and PPP6C; these interactions positively regulate the RIGI signaling pathway. In terms of processing, sumoylated with SUMO1 and SUMO2/3. In terms of tissue distribution, ubiquitously expressed.

Its subcellular location is the nucleus. The protein localises to the cytoplasm. The enzyme catalyses ATP + H2O = ADP + phosphate + H(+). Functions as a modulator of initiation or reinitiation events during DNA polymerase delta-mediated DNA synthesis. In the presence of ATP, stimulation of DNA polymerase delta-mediated DNA synthesis is decreased. Also plays a role in the innate immune defense against viruses. Stabilizes the RIGI dsRNA interaction and promotes RIGI 'Lys-63'-linked polyubiquitination. In turn, RIGI transmits the signal through mitochondrial MAVS. In Mus musculus (Mouse), this protein is ATPase WRNIP1.